Here is a 72-residue protein sequence, read N- to C-terminus: Small ribosomal subunit protein bS18 (72 aa).

The protein belongs to the bacterial ribosomal protein bS18 family. In terms of assembly, part of the 30S ribosomal subunit. Forms a tight heterodimer with protein bS6.

Its function is as follows. Binds as a heterodimer with protein bS6 to the central domain of the 16S rRNA, where it helps stabilize the platform of the 30S subunit. This chain is Small ribosomal subunit protein bS18, found in Francisella tularensis subsp. holarctica (strain FTNF002-00 / FTA).